Reading from the N-terminus, the 245-residue chain is Probable phosphatase YcdX (245 aa).

Residues His7, His9, His15, His40, Glu73, His101, His131, Asp192, and His194 each coordinate Zn(2+).

The protein belongs to the PHP family. Homotrimer. Requires Zn(2+) as cofactor.

The sequence is that of Probable phosphatase YcdX from Escherichia coli (strain K12 / MC4100 / BW2952).